Consider the following 1384-residue polypeptide: MSIQPSEVAASSARTDTREALGIEESAFDCVSITVASPETIRKWSKGEVKNPETINYRTFKPEPGGLFCQKIFGPVRDYECACGKYKRIKYKDVVCDRCGVEVTIARVRRERMGHIELAVPVAHIWFLKSMPSRLGLLLDMTARSLERVIYYENYMVIDPGKTPLEPHQLLTDTEYRQAIDEYGEDSFVAKMGAEAVRDALVKTDLEATVAELQEQMRATKSKQIKKKLSKRLKVIQGFIHSKSRPEWMVLEVLPVIPPDLRPLVPLEGGRFATSDLNDLYRRVINRNNRLRNLMQLKTPDVIIHNEKRMLQEAVDALFDNGRHGRPVTGAGNRPLKSLSDMLKGKQGRFRQNLLGKRVDYSGRSVIVIGPELKLHQCGLPKKMALVLFEPFIIRRLKELGFVHTVRGARKMIEKKSPEVWDILEEVTKGHPVLLNRAPTLHRLSIQAFEPVLIEGEAIRVHPLVCTAYNADFDGDQMAVHVPLSLEAIMECKLLMMATSNIFSPSSGKPILTPSQDIVLGAYYLTVEPRKKPAKDERVPLLSGLQEVLYAVADGAMKKHDWVEVPNPDHGRETIFGNKEKKVLRTTVGRVIFNQIWPAGLGFVNFPVPKSKLGDLILNTHKLTGNQATVETLDRLKELGFTTAMQAGISIGIDDMIIPEAKKDIVAETRKKIAEVEAQFNKGIITEGERKNKVIDLWTGTTDRIAKEVFAKLESNEGRNEVNPVYIMMDSGARGNKQQVRQLCGTRGLMAKPSGEIIERPILSSFREGLTVLEYFISTHGARKGLADTALKTADAGYLTRKLCDVAMDVIIAEDDCGSRDGVWKKAIFEGDDEIVSLRERIVGRFSSDDVFNPINPSEILVGSGELITEEIATRVDELGIERVKVMSPLTSTAQHGIDGKSYGINPATGKVAKVGDSVGIIAAQSIGEPGTQLTMRTFHIGGVASGGFKTPEIKVRASGTVRYRGLRLVETADGGSIVLNKTGTIQIVDAEEKELETYNIVVGSFLHVGDGEQIQKGAILAQWDPYNIPVLSEKGGTLAFKDMIPGVTVKRELDESSGRIATVVIEHKEDLNPQIEIRDPKGKPLAAYSIPVGAQIAVNEGDIIQPGALLAKTPRQASKTKDITGGLPRVAELFEARRPKDAAEMSRIDGIVSFEGTVRGKRKLVVKNDDTAQEEEHLIATGKHIIVQPGDVVHKGQHLTEGAADPHEILEILGPSALYDFLISQVQEVYRLQGVAINDKHIEIIIRQMLRKVRITDPGDTENFWGEQVDRAQFLAENRRIEEAGGKPAEAEPILLGITKASLETESFISAASFQETTRVLTDASTLGKVDMLKGFKENVIMGHLIPAGTGLPKYKNLKITLPFGADLPVEPEQPAPAATETA.

Residues C81, C83, C96, and C99 each coordinate Zn(2+). Residues D472, D474, and D476 each coordinate Mg(2+).

Belongs to the RNA polymerase beta' chain family. The RNAP catalytic core consists of 2 alpha, 1 beta, 1 beta' and 1 omega subunit. When a sigma factor is associated with the core the holoenzyme is formed, which can initiate transcription. Requires Mg(2+) as cofactor. It depends on Zn(2+) as a cofactor.

It carries out the reaction RNA(n) + a ribonucleoside 5'-triphosphate = RNA(n+1) + diphosphate. In terms of biological role, DNA-dependent RNA polymerase catalyzes the transcription of DNA into RNA using the four ribonucleoside triphosphates as substrates. This chain is DNA-directed RNA polymerase subunit beta', found in Opitutus terrae (strain DSM 11246 / JCM 15787 / PB90-1).